The chain runs to 264 residues: Transmembrane protein 41A (264 aa).

Residues 1-17 (MHSLLGLLLVFAGSTFA) form the signal peptide. Helical transmembrane passes span 67–87 (VYVF…AIPG), 90–110 (FLNV…LCCV), 153–173 (LFFF…FLNL), 175–195 (APIL…GLIP), and 219–239 (WETA…GTLI). Residues 96 to 207 (GALFGPWLGL…FICVQTGSIL (112 aa)) form a VTT domain region.

Belongs to the TMEM41 family.

The protein resides in the membrane. The protein is Transmembrane protein 41A (TMEM41A) of Bos taurus (Bovine).